Here is an 87-residue protein sequence, read N- to C-terminus: Ragulator complex protein LAMTOR4 homolog (87 aa).

Belongs to the LAMTOR4 family. Part of the Ragulator complex.

It localises to the lysosome. Regulator of the TOR pathway, a signaling cascade that promotes cell growth in response to growth factors, energy levels, and amino acids. As part of the Ragulator complex, may activate the TOR signaling cascade in response to amino acids. The protein is Ragulator complex protein LAMTOR4 homolog of Dictyostelium discoideum (Social amoeba).